We begin with the raw amino-acid sequence, 432 residues long: Adenylosuccinate synthetase (432 aa).

GTP-binding positions include 13 to 19 (GDEGKGK) and 41 to 43 (GHT). Residue aspartate 14 is the Proton acceptor of the active site. Aspartate 14 and glycine 41 together coordinate Mg(2+). Residues 14-17 (DEGK), 39-42 (NAGH), threonine 130, arginine 144, glutamine 225, threonine 240, and arginine 304 each bind IMP. Histidine 42 serves as the catalytic Proton donor. 300-306 (ATTGRRR) is a binding site for substrate. Residues arginine 306, 332–334 (KLD), and 415–417 (STG) contribute to the GTP site.

This sequence belongs to the adenylosuccinate synthetase family. As to quaternary structure, homodimer. The cofactor is Mg(2+).

The protein localises to the cytoplasm. It catalyses the reaction IMP + L-aspartate + GTP = N(6)-(1,2-dicarboxyethyl)-AMP + GDP + phosphate + 2 H(+). It functions in the pathway purine metabolism; AMP biosynthesis via de novo pathway; AMP from IMP: step 1/2. Functionally, plays an important role in the de novo pathway of purine nucleotide biosynthesis. Catalyzes the first committed step in the biosynthesis of AMP from IMP. This chain is Adenylosuccinate synthetase, found in Salmonella heidelberg (strain SL476).